The chain runs to 357 residues: Geranylgeranyl pyrophosphate synthase 11, chloroplastic (357 aa).

A chloroplast-targeting transit peptide spans 1–37 (MATTLSSSSLFIQFRGRRYNSLSSFNNLQKRTVLSLS). Isopentenyl diphosphate is bound by residues lysine 103, arginine 106, and histidine 135. Mg(2+) is bound by residues aspartate 142 and aspartate 148. Position 153 (arginine 153) interacts with dimethylallyl diphosphate. Arginine 154 lines the isopentenyl diphosphate pocket. Dimethylallyl diphosphate contacts are provided by lysine 242, threonine 243, glutamine 280, lysine 297, and lysine 307.

This sequence belongs to the FPP/GGPP synthase family. In terms of assembly, monomer. It depends on Mg(2+) as a cofactor.

The protein localises to the plastid. It is found in the chloroplast. The catalysed reaction is isopentenyl diphosphate + dimethylallyl diphosphate = (2E)-geranyl diphosphate + diphosphate. It catalyses the reaction isopentenyl diphosphate + (2E)-geranyl diphosphate = (2E,6E)-farnesyl diphosphate + diphosphate. It carries out the reaction isopentenyl diphosphate + (2E,6E)-farnesyl diphosphate = (2E,6E,10E)-geranylgeranyl diphosphate + diphosphate. Its pathway is isoprenoid biosynthesis; farnesyl diphosphate biosynthesis; farnesyl diphosphate from geranyl diphosphate and isopentenyl diphosphate: step 1/1. The protein operates within isoprenoid biosynthesis; geranyl diphosphate biosynthesis; geranyl diphosphate from dimethylallyl diphosphate and isopentenyl diphosphate: step 1/1. It functions in the pathway isoprenoid biosynthesis; geranylgeranyl diphosphate biosynthesis; geranylgeranyl diphosphate from farnesyl diphosphate and isopentenyl diphosphate: step 1/1. Its function is as follows. Catalyzes the trans-addition of the three molecules of IPP onto DMAPP to form geranylgeranyl pyrophosphate. The polypeptide is Geranylgeranyl pyrophosphate synthase 11, chloroplastic (Arabidopsis thaliana (Mouse-ear cress)).